Reading from the N-terminus, the 1239-residue chain is Structural polyprotein (1239 aa).

Positions 15-95 (RPAPVQRYIP…KKKSKPGKRM (81 aa)) are disordered. The interval 36–62 (RGPSQLQQLVAALGALALQPKQKQKRA) is host transcription inhibition. The segment covering 38 to 56 (PSQLQQLVAALGALALQPK) has biased composition (low complexity). Positions 55–91 (PKQKQKRAQKKPKKTPPPKPKKTQKPKKPTQKKKSKP) match the Nuclear localization signal motif. A compositionally biased stretch (basic residues) spans 57–95 (QKQKRAQKKPKKTPPPKPKKTQKPKKPTQKKKSKPGKRM). The tract at residues 78–106 (QKPKKPTQKKKSKPGKRMRNCMKIENDCI) is binding to the viral RNA. The tract at residues 91–105 (PGKRMRNCMKIENDC) is ribosome-binding. A disulfide bridge connects residues Cys-105 and Cys-120. Residues 105 to 253 (CIFPVMLDGK…RITPEESVEW (149 aa)) form the Peptidase S3 domain. Catalysis depends on His-131, which acts as the Charge relay system. Positions 136-146 (IDNPELAKLTF) match the Nuclear export signal motif. The interaction with spike glycoprotein E2 stretch occupies residues 147 to 152 (KKSSKY). Residue Asp-153 is the Charge relay system of the active site. The dimerization of the capsid protein stretch occupies residues 175 to 185 (PEGHYNWHHGA). Ser-205 serves as the catalytic Charge relay system. The dimerization of the capsid protein stretch occupies residues 211-215 (DNTGK). The segment at 254–269 (SAAALNITALCVLQNL) is functions as an uncleaved signal peptide for the precursor of protein E3/E2. Disulfide bonds link Cys-264–Cys-273, Cys-278–Cys-282, Cys-281–Cys-313, Cys-339–Cys-443, Cys-342–Cys-348, Cys-411–Cys-425, Cys-471–Cys-585, Cys-519–Cys-545, and Cys-521–Cys-539. A glycan (N-linked (GlcNAc...) asparagine; by host) is linked at Asn-268. Over 322–686 (SVAHFEAYKA…HYYDLYPYWT (365 aa)) the chain is Extracellular. Residues 687-707 (ITVLASLGLLIVISSGFSCFL) form a helical membrane-spanning segment. S-palmitoyl cysteine; by host attachment occurs at residues Cys-705 and Cys-708. At 708 to 751 (CSVARTKCLTPYQLAPGAQLPTFIALLCCAKSARADTLDDFSYL) the chain is on the cytoplasmic side. Residues 710 to 714 (VARTK) are interaction with the capsid protein. S-palmitoyl cysteine; by host attachment occurs at residues Cys-715, Cys-735, and Cys-736. Cys-715 and Cys-736 are joined by a disulfide. The Extracellular portion of the chain corresponds to 752-756 (WTNNQ). The helical transmembrane segment at 757–777 (AMFWLQLASPVAAFLCLSYCC) threads the bilayer. Topologically, residues 778-779 (RN) are cytoplasmic. The chain crosses the membrane as a helical span at residues 780 to 800 (LACCMKIFLGISGLCVIATQA). Over 801–1216 (YEHSTTMPNQ…WQWLAHTTSG (416 aa)) the chain is Extracellular. 4 cysteine pairs are disulfide-bonded: Cys-849–Cys-914, Cys-862–Cys-894, Cys-863–Cys-896, and Cys-868–Cys-878. Residues 884–901 (VYPFMWGGAYCFCDTENS) form an E1 fusion peptide loop region. N-linked (GlcNAc...) asparagine; by host glycosylation is found at Asn-941, Asn-1009, and Asn-1070. Cystine bridges form between Cys-1059–Cys-1071, Cys-1101–Cys-1176, Cys-1106–Cys-1180, and Cys-1128–Cys-1170. A helical transmembrane segment spans residues 1217–1237 (PLTILVVAIIVVVVVSIVVCA). Residue Cys-1236 is the site of S-palmitoyl cysteine; by host attachment. Over 1238-1239 (RH) the chain is Cytoplasmic.

In terms of assembly, homodimer. Homomultimer. Interacts with host karyopherin KPNA4; this interaction allows the nuclear import of the viral capsid protein. Interacts with spike glycoprotein E2. Interacts with host IRAK1; the interaction leads to inhibition of IRAK1-dependent signaling. As to quaternary structure, the precursor of protein E3/E2 and E1 form a heterodimer shortly after synthesis. Interacts with spike glycoprotein E1. The precursor of protein E3/E2 and E1 form a heterodimer shortly after synthesis. Processing of the precursor of protein E3/E2 into E2 and E3 results in a heterodimer of the spike glycoproteins E2 and E1. Spike at virion surface are constituted of a trimer of E2-E1 heterodimers. After target cell attachment and endocytosis, E1 change conformation to form homotrimers. Interacts with 6K protein. In terms of assembly, interacts with spike glycoprotein E1. Processing of the precursor of protein E3/E2 into E2 and E3 results in a heterodimer of the spike glycoproteins E2 and E1. Spike at virion surface are constituted of a trimer of E2-E1 heterodimers. Interacts with 6K protein. Interacts with host MXRA8; this interaction mediates virus entry. Interacts with the capsid protein. As to quaternary structure, oligomer. Interacts with spike glycoprotein E1. Interacts with spike glycoprotein E2. Post-translationally, structural polyprotein: Specific enzymatic cleavages in vivo yield mature proteins. Capsid protein is auto-cleaved during polyprotein translation, unmasking a signal peptide at the N-terminus of the precursor of E3/E2. The remaining polyprotein is then targeted to the host endoplasmic reticulum, where host signal peptidase cleaves it into pE2, 6K and E1 proteins. pE2 is further processed to mature E3 and E2 by host furin in trans-Golgi vesicle. In terms of processing, palmitoylated via thioester bonds. These palmitoylations may induce disruption of the C-terminus transmembrane. This would result in the reorientation of E2 C-terminus from lumenal to cytoplasmic side. N-glycosylated. Post-translationally, palmitoylated via thioester bonds.

It is found in the virion. The protein localises to the host cytoplasm. The protein resides in the host cell membrane. It localises to the host nucleus. Its subcellular location is the virion membrane. It is found in the host Golgi apparatus. The protein localises to the host trans-Golgi network. The protein resides in the host endoplasmic reticulum. The enzyme catalyses Autocatalytic release of the core protein from the N-terminus of the togavirus structural polyprotein by hydrolysis of a -Trp-|-Ser- bond.. In terms of biological role, forms an icosahedral capsid with a T=4 symmetry composed of 240 copies of the capsid protein surrounded by a lipid membrane through which penetrate 80 spikes composed of trimers of E1-E2 heterodimers. The capsid protein binds to the viral RNA genome at a site adjacent to a ribosome binding site for viral genome translation following genome release. Possesses a protease activity that results in its autocatalytic cleavage from the nascent structural protein. Following its self-cleavage, the capsid protein transiently associates with ribosomes, and within several minutes the protein binds to viral RNA and rapidly assembles into icosahedric core particles. The resulting nucleocapsid eventually associates with the cytoplasmic domain of the spike glycoprotein E2 at the cell membrane, leading to budding and formation of mature virions. In case of infection, new virions attach to target cells and after clathrin-mediated endocytosis their membrane fuses with the host endosomal membrane. This leads to the release of the nucleocapsid into the cytoplasm, followed by an uncoating event necessary for the genomic RNA to become accessible. The uncoating might be triggered by the interaction of capsid proteins with ribosomes. Binding of ribosomes would release the genomic RNA since the same region is genomic RNA-binding and ribosome-binding. Specifically inhibits interleukin-1 receptor-associated kinase 1/IRAK1-dependent signaling during viral entry, representing a means by which the alphaviruses may evade innate immune detection and activation prior to viral gene expression. Provides the signal sequence for the translocation of the precursor of protein E3/E2 to the host endoplasmic reticulum. Furin-cleaved E3 remains associated with spike glycoprotein E1 and mediates pH protection of the latter during the transport via the secretory pathway. After virion release from the host cell, the assembly protein E3 is gradually released in the extracellular space. Its function is as follows. Plays a role in viral attachment to target host cell, by binding to the cell receptor MXRA8. Synthesized as a p62 precursor which is processed by furin at the cell membrane just before virion budding, giving rise to E2-E1 heterodimer. The p62-E1 heterodimer is stable, whereas E2-E1 is unstable and dissociate at low pH. p62 is processed at the last step, presumably to avoid E1 fusion activation before its final export to cell surface. E2 C-terminus contains a transitory transmembrane that would be disrupted by palmitoylation, resulting in reorientation of the C-terminal tail from lumenal to cytoplasmic side. This step is critical since E2 C-terminus is involved in budding by interacting with capsid proteins. This release of E2 C-terminus in cytoplasm occurs lately in protein export, and precludes premature assembly of particles at the endoplasmic reticulum membrane. Functionally, acts as a viroporin that participates in virus glycoprotein processing and transport to the plasma membrane, cell permeabilization and budding of viral particles. The cation channel is permeable to Na(+)&gt;K(+)&gt;Ca(2+) in vitro. Disrupts the calcium homeostasis of the cell, probably at the endoplasmic reticulum level. This leads to cytoplasmic calcium elevation. Because of its lipophilic properties, the 6K protein is postulated to influence the selection of lipids that interact with the transmembrane domains of the glycoproteins, which, in turn, affects the deformability of the bilayer required for the extreme curvature that occurs as budding proceeds. Present in low amount in virions, about 3% compared to viral glycoproteins. In terms of biological role, class II viral fusion protein. Fusion activity is inactive as long as E1 is bound to E2 in mature virion. After virus attachment to target cell via host MXRA8 and endocytosis, acidification of the endosome induce dissociation of E1/E2 heterodimer and concomitant trimerization of the E1 subunits. This E1 trimer is fusion active, and promotes release of viral nucleocapsid in cytoplasm after endosome and viral membrane fusion. Efficient fusion requires the presence of cholesterol and sphingolipid in the target membrane. This Anopheles amictus (Common banded mosquito) protein is Structural polyprotein.